Here is a 104-residue protein sequence, read N- to C-terminus: Circadian clock oscillator protein KaiB (104 aa).

The protein belongs to the KaiB family. In terms of assembly, the KaiABC complex composition changes during the circadian cycle to control KaiC phosphorylation. Complexes KaiC(6), KaiA(2-4):KaiC(6), KaiB(6):KaiC(6) and KaiC(6):KaiB(6):KaiA(12) are among the most important forms, many form cooperatively. Undergoes a major conformational rearrangment; in the free state forms homotetramers as a dimer of dimers. When bound to the CI domain of KaiC switches to a monomeric thioredoxin-fold (KaiB(fs)). KaiB(fs) binds CikA, leading it to dephosphorylate phospho-RpaA.

Its function is as follows. Key component of the KaiABC oscillator complex, which constitutes the main circadian regulator in cyanobacteria. Complex composition changes during the circadian cycle to control KaiC phosphorylation. KaiA stimulates KaiC autophosphorylation, while KaiB sequesters KaiA, leading to KaiC autodephosphorylation. Phospho-Ser-431 KaiC accumulation triggers binding of KaiB to form the KaiB(6):KaiC(6) complex, leading to changes in output regulators CikA and SasA. KaiB switches to a thioredoxin-like fold (KaiB(fs)) when bound to KaiC. KaiB(6):KaiC(6) formation exposes a site for KaiA binding that sequesters KaiA from KaiC, making the KaiC(6):KaiB(6):KaiA(12) complex that results in KaiC autodephosphorylation. In terms of biological role, a metamorphic protein which reversibly switches between an inactive tetrameric fold and a rare, thioredoxin-like monomeric fold (KaiB(fs)). KaiB(fs) binds phospho-KaiC, KaiA and CikA. KaiA and CikA compete for binding to KaiB(fs), and KaiB(fs) and SasA compete for binding to KaiC, thus the clock oscillator and output signal pathway are tightly coupled. In Microcystis aeruginosa (strain NIES-843 / IAM M-2473), this protein is Circadian clock oscillator protein KaiB.